A 256-amino-acid chain; its full sequence is Small ribosomal subunit protein eS1A (256 aa).

An N-acetylalanine; partial modification is found at Ala2.

It belongs to the eukaryotic ribosomal protein eS1 family. As to quaternary structure, component of the small ribosomal subunit. Mature ribosomes consist of a small (40S) and a large (60S) subunit. The 40S subunit contains about 33 different proteins and 1 molecule of RNA (18S). The 60S subunit contains about 49 different proteins and 3 molecules of RNA (25S, 5.8S and 5S).

It localises to the cytoplasm. This Debaryomyces hansenii (strain ATCC 36239 / CBS 767 / BCRC 21394 / JCM 1990 / NBRC 0083 / IGC 2968) (Yeast) protein is Small ribosomal subunit protein eS1A.